Here is a 518-residue protein sequence, read N- to C-terminus: Putative cytochrome P450 CYP13A6 (518 aa).

Cys-463 provides a ligand contact to heme.

Belongs to the cytochrome P450 family. It depends on heme as a cofactor.

Functionally, cytochromes P450 are a group of heme-thiolate monooxygenases. They oxidize a variety of structurally unrelated compounds, including steroids, fatty acids, and xenobiotics. The chain is Putative cytochrome P450 CYP13A6 (cyp-13A6) from Caenorhabditis elegans.